A 241-amino-acid polypeptide reads, in one-letter code: Outer membrane protein A (241 aa).

The next 5 beta stranded transmembrane spans lie at 1 to 8, 13 to 21, 46 to 55, 60 to 67, and 86 to 94; these read LTAKLSYP, LDIYTRLGG, PVFAGGVEYA, IATRLEYQ, and MLSVGVSYR. Repeat copies occupy residues 105-106, 107-108, 109-110, and 111-112. The interval 105 to 112 is 4 X 2 AA tandem repeats of A-P; it reads APAPAPAP. Residues 114–241 enclose the OmpA-like domain; sequence VQTKHFTLKS…RRVEIEVKGV (128 aa). A disulfide bond links cysteine 215 and cysteine 227.

It belongs to the outer membrane OOP (TC 1.B.6) superfamily. OmpA family. In terms of assembly, monomer and homodimer.

It is found in the cell outer membrane. In terms of biological role, with TolR probably plays a role in maintaining the position of the peptidoglycan cell wall in the periplasm. Acts as a porin with low permeability that allows slow penetration of small solutes; an internal gate slows down solute passage. The chain is Outer membrane protein A from Shimwellia blattae (Escherichia blattae).